A 508-amino-acid polypeptide reads, in one-letter code: MWELVALLLLTLAYLFWPKRRCPGAKYPKSLLSLPLVGSLPFLPRHGHMHNNFFKLQKKYGPIYSVRMGTKTTVIVGHHQLAKEVLIKKGKDFSGRPQVTTLDILSNNRKGIAFADYGAHWQLHRRLAMATFALFKDGDQKLEKIICQEISTLCDMLATHNGQTIDISFPVFVAITNVISLICFNISYKNGDPELKIVHNYNEGIIDSLGKESLVDLFPWLKVFPNKTLEKLKRHVKTRNDLLTKIFENYKEKFRSDSITNMLDVLMQAKMNSDNGNAGPDQDSELLSDNHILTTIGDIFGAGVETTTSVVKWIVAFLLHNPQVKKKLYEEIDQNVGFSRTPTISDRNRLLLLEATIREVLRIRPVAPMLIPHKANVDSSIGEFAVDKGTHVIINLWALHHNEKEWHQPDQFMPERFLNPAGTQLISPSLSYLPFGAGPRSCIGEILARQELFLIMAWLLQRFDLEVPDDGQLPSLEGNPKVVFLIDSFKVKIKVRQAWREAQAEGST.

Substrate is bound at residue Asn-202. Cys-442 contributes to the heme binding site.

This sequence belongs to the cytochrome P450 family. Requires heme as cofactor.

It localises to the endoplasmic reticulum membrane. The protein localises to the microsome membrane. The enzyme catalyses a C21-steroid + reduced [NADPH--hemoprotein reductase] + O2 = a 17alpha-hydroxy-C21-steroid + oxidized [NADPH--hemoprotein reductase] + H2O + H(+). It catalyses the reaction progesterone + reduced [NADPH--hemoprotein reductase] + O2 = 17alpha-hydroxyprogesterone + oxidized [NADPH--hemoprotein reductase] + H2O + H(+). It carries out the reaction pregnenolone + reduced [NADPH--hemoprotein reductase] + O2 = 17alpha-hydroxypregnenolone + oxidized [NADPH--hemoprotein reductase] + H2O + H(+). The catalysed reaction is 17alpha-hydroxyprogesterone + reduced [NADPH--hemoprotein reductase] + O2 = androst-4-ene-3,17-dione + acetate + oxidized [NADPH--hemoprotein reductase] + H2O + 2 H(+). The enzyme catalyses 17alpha-hydroxyprogesterone + reduced [NADPH--hemoprotein reductase] + O2 = 16alpha,17alpha-dihydroxyprogesterone + oxidized [NADPH--hemoprotein reductase] + H2O + H(+). It catalyses the reaction 16alpha,17alpha-dihydroxyprogesterone + reduced [NADPH--hemoprotein reductase] + O2 = 6beta,16alpha,17alpha-trihydroxyprogesterone + oxidized [NADPH--hemoprotein reductase] + H2O + H(+). It carries out the reaction 17alpha-hydroxypregnenolone + reduced [NADPH--hemoprotein reductase] + O2 = 3beta-hydroxyandrost-5-en-17-one + acetate + oxidized [NADPH--hemoprotein reductase] + H2O + 2 H(+). The catalysed reaction is 16alpha,17alpha-dihydroxypregnenolone + reduced [NADPH--hemoprotein reductase] + O2 = 3beta,16alpha-dihydroxy-androst-5-en-17-one + acetate + oxidized [NADPH--hemoprotein reductase] + H2O + 2 H(+). The enzyme catalyses 3beta-hydroxyandrost-5-en-17-one + reduced [NADPH--hemoprotein reductase] + O2 = 3beta,16alpha-dihydroxy-androst-5-en-17-one + oxidized [NADPH--hemoprotein reductase] + H2O + H(+). It catalyses the reaction androst-4-ene-3,17-dione + reduced [NADPH--hemoprotein reductase] + O2 = 16alpha-hydroxyandrost-4-ene-3,17-dione + oxidized [NADPH--hemoprotein reductase] + H2O + H(+). It participates in steroid hormone biosynthesis. It functions in the pathway steroid biosynthesis; glucocorticoid biosynthesis. Regulated predominantly by intracellular cAMP levels. The 17,20-lyase activity is stimulated by cytochrome b5, which acts as an allosteric effector increasing the Vmax of the lyase activity. A cytochrome P450 monooxygenase involved in corticoid and androgen biosynthesis. Catalyzes 17-alpha hydroxylation of C21 steroids, which is common for both pathways. A second oxidative step, required only for androgen synthesis, involves an acyl-carbon cleavage. The 17-alpha hydroxy intermediates, as part of adrenal glucocorticoids biosynthesis pathway, are precursors of cortisol. Hydroxylates steroid hormones, pregnenolone and progesterone to form 17-alpha hydroxy metabolites, followed by the cleavage of the C17-C20 bond to form C19 steroids, dehydroepiandrosterone (DHEA) and androstenedione. Has 16-alpha hydroxylase activity. Catalyzes 16-alpha hydroxylation of 17-alpha hydroxy pregnenolone, followed by the cleavage of the C17-C20 bond to form 16-alpha-hydroxy DHEA. Also 16-alpha hydroxylates androgens, relevant for estriol synthesis. Mechanistically, uses molecular oxygen inserting one oxygen atom into a substrate, and reducing the second into a water molecule, with two electrons provided by NADPH via cytochrome P450 reductase (CPR; NADPH-ferrihemoprotein reductase). The polypeptide is Steroid 17-alpha-hydroxylase/17,20 lyase (CYP17A1) (Papio cynocephalus (Yellow baboon)).